The following is a 65-amino-acid chain: Large ribosomal subunit protein bL35 (65 aa).

Residues 1 to 30 (MPKMKTVSGAAKRFKKTGSGRFKSKQSHLR) form a disordered region. The span at 12–30 (KRFKKTGSGRFKSKQSHLR) shows a compositional bias: basic residues.

The protein belongs to the bacterial ribosomal protein bL35 family.

This Alteromonas mediterranea (strain DSM 17117 / CIP 110805 / LMG 28347 / Deep ecotype) protein is Large ribosomal subunit protein bL35.